A 293-amino-acid chain; its full sequence is Formamidopyrimidine-DNA glycosylase (293 aa).

Proline 2 (schiff-base intermediate with DNA) is an active-site residue. Glutamate 3 (proton donor) is an active-site residue. Lysine 58 serves as the catalytic Proton donor; for beta-elimination activity. Positions 104, 127, and 170 each coordinate DNA. Residues 257–293 (SVYGREGKPCRNPACGGTVERVVQSGRSTFFCASCQT) form an FPG-type zinc finger. Arginine 283 functions as the Proton donor; for delta-elimination activity in the catalytic mechanism.

It belongs to the FPG family. Monomer. It depends on Zn(2+) as a cofactor.

The catalysed reaction is Hydrolysis of DNA containing ring-opened 7-methylguanine residues, releasing 2,6-diamino-4-hydroxy-5-(N-methyl)formamidopyrimidine.. It catalyses the reaction 2'-deoxyribonucleotide-(2'-deoxyribose 5'-phosphate)-2'-deoxyribonucleotide-DNA = a 3'-end 2'-deoxyribonucleotide-(2,3-dehydro-2,3-deoxyribose 5'-phosphate)-DNA + a 5'-end 5'-phospho-2'-deoxyribonucleoside-DNA + H(+). In terms of biological role, involved in base excision repair of DNA damaged by oxidation or by mutagenic agents. Acts as a DNA glycosylase that recognizes and removes damaged bases. Has a preference for oxidized purines, such as 7,8-dihydro-8-oxoguanine (8-oxoG). Has AP (apurinic/apyrimidinic) lyase activity and introduces nicks in the DNA strand. Cleaves the DNA backbone by beta-delta elimination to generate a single-strand break at the site of the removed base with both 3'- and 5'-phosphates. The polypeptide is Formamidopyrimidine-DNA glycosylase (Brucella ovis (strain ATCC 25840 / 63/290 / NCTC 10512)).